The chain runs to 575 residues: Alpha-(1,6)-fucosyltransferase (575 aa).

Topologically, residues 1–9 (MRPWTGSWR) are cytoplasmic. A helical; Signal-anchor for type II membrane protein membrane pass occupies residues 10–30 (WIMLILFAWGTLLFYIGGHLV). Residues 31 to 575 (RDNDHPDHSS…KVPHVPEAEK (545 aa)) lie on the Lumenal side of the membrane. Disulfide bonds link Cys-204-Cys-266, Cys-212-Cys-230, and Cys-218-Cys-222. In terms of domain architecture, GT23 spans 206 to 493 (KAKKLVCNIN…PDASANFHSL (288 aa)). A Phosphoserine modification is found at Ser-278. The short motif at 299–305 (PRPPYLP) is the SH3-binding element. Residues 365–366 (RR) form an important for donor substrate binding region. Cys-465 and Cys-472 are oxidised to a cystine. Positions 502 to 563 (QNAHNQIAIY…PSYKVREKIE (62 aa)) constitute an SH3 domain.

The protein belongs to the glycosyltransferase 23 family. In terms of processing, tyrosine phosphorylated by PKDCC/VLK. As to expression, highest expression found in brain. Also found in heart, lung, spleen and kidney.

Its subcellular location is the golgi apparatus. It localises to the golgi stack membrane. The catalysed reaction is N(4)-{beta-D-GlcNAc-(1-&gt;2)-alpha-D-Man-(1-&gt;3)-[beta-D-GlcNAc-(1-&gt;2)-alpha-D-Man-(1-&gt;6)]-beta-D-Man-(1-&gt;4)-beta-D-GlcNAc-(1-&gt;4)-beta-D-GlcNAc}-L-asparaginyl-[protein] + GDP-beta-L-fucose = an N(4)-{beta-D-GlcNAc-(1-&gt;2)-alpha-D-Man-(1-&gt;3)-[beta-D-GlcNAc-(1-&gt;2)-alpha-D-Man-(1-&gt;6)]-beta-D-Man-(1-&gt;4)-beta-D-GlcNAc-(1-&gt;4)-[alpha-L-Fuc-(1-&gt;6)]-beta-D-GlcNAc}-L-asparaginyl-[protein] + GDP + H(+). It participates in protein modification; protein glycosylation. Functionally, catalyzes the addition of fucose in alpha 1-6 linkage to the first GlcNAc residue, next to the peptide chains in N-glycans. This is Alpha-(1,6)-fucosyltransferase (FUT8) from Bos taurus (Bovine).